The chain runs to 217 residues: Large ribosomal subunit protein uL1 (217 aa).

The residue at position 122 (lysine 122) is an N6,N6-dimethyllysine; alternate. Lysine 122 carries the post-translational modification N6-methyllysine; alternate.

It belongs to the universal ribosomal protein uL1 family.

The protein is Large ribosomal subunit protein uL1 (rpl10a) of Dictyostelium discoideum (Social amoeba).